Consider the following 163-residue polypeptide: Protein EARLY RESPONSIVE TO DEHYDRATION 15 (163 aa).

A PAM2-like motif is present at residues 10–20; sequence TLNPDAPLFIP. The tract at residues 118 to 163 is disordered; the sequence is NGEMVKKSSGNRSPRSIVEPAKYAEKPAKWGNQRVAAAPRNIHQPR.

Interacts with PAB2, PAB4 and PAB8. Interacts with MPC. As to expression, expressed in cauline leaves, stems, rosette leaves, immature siliques and primary inflorescences.

Its subcellular location is the cytoplasm. Central component of stress responses that interacts with poly(A)-binding proteins. Negative regulator of abscisic acid (ABA) responses, including resistance to drought and freezing as well as stomatal closure regulation. Mediates resistance to the bacterial necrotroph pathogen Erwinia carotovora subsp. carotovora and promotes the induction of marker genes for systemic acquired resistance (SAR). This Arabidopsis thaliana (Mouse-ear cress) protein is Protein EARLY RESPONSIVE TO DEHYDRATION 15 (ERD15).